The following is a 435-amino-acid chain: Histidine--tRNA ligase (435 aa).

A disordered region spans residues 415–435; that stretch reads SVPLSAFPGDYDRPTFEDFAE. Basic and acidic residues predominate over residues 424–435; the sequence is DYDRPTFEDFAE.

It belongs to the class-II aminoacyl-tRNA synthetase family.

The protein localises to the cytoplasm. The catalysed reaction is tRNA(His) + L-histidine + ATP = L-histidyl-tRNA(His) + AMP + diphosphate + H(+). The protein is Histidine--tRNA ligase of Haloarcula marismortui (strain ATCC 43049 / DSM 3752 / JCM 8966 / VKM B-1809) (Halobacterium marismortui).